The chain runs to 361 residues: MSAAFDPSSYATQLDAKVARLRELLAPFGAPEPAVFDSPREHYRLRAEFRLWREDGQRHYAMFAPGEKHKAILIDDFPIASERINALMPRLKAAWQASEELGNRLFQVEFLTTLAGDAMITMCYHRPLDEAWEVEARQLAEALGVSVIGRSKGKRLVIGRDYAVEKLDVAGRVFSYRQPEGAFTQPNGAVNQKMLSWAFEAMGDREDDLLELYCGNGNFTLPLATRVRQVLATEISKTSVNAALSNLDENAVDNVRLVRLSAEELTQALNEVRPFRRLEGIDLKSYQFGTVFVDPPRAGMDPDTCELTRRFERILYISCNPETLAANIAQLQDTHRIERCALFDQFPYTHHMESGVLLVRR.

Residues Q185, Y213, N218, E234, and D294 each contribute to the S-adenosyl-L-methionine site. C319 serves as the catalytic Nucleophile. E353 (proton acceptor) is an active-site residue.

The protein belongs to the class I-like SAM-binding methyltransferase superfamily. RNA M5U methyltransferase family. TrmA subfamily.

It catalyses the reaction uridine(54) in tRNA + S-adenosyl-L-methionine = 5-methyluridine(54) in tRNA + S-adenosyl-L-homocysteine + H(+). It carries out the reaction uridine(341) in tmRNA + S-adenosyl-L-methionine = 5-methyluridine(341) in tmRNA + S-adenosyl-L-homocysteine + H(+). Its function is as follows. Dual-specificity methyltransferase that catalyzes the formation of 5-methyluridine at position 54 (m5U54) in all tRNAs, and that of position 341 (m5U341) in tmRNA (transfer-mRNA). This chain is tRNA/tmRNA (uracil-C(5))-methyltransferase, found in Pseudomonas putida (strain ATCC 700007 / DSM 6899 / JCM 31910 / BCRC 17059 / LMG 24140 / F1).